The sequence spans 333 residues: MKFIDQTIIQVIAGNGGNGCVNFRREKYIPKGGPDGGDGGDGGNVWLQSDNNLNTLIDLRFKKTFQAPHGENGSGKNCSGKKGSDIKIYVPVGTKIINYQTREIIGDLIKHKQKILIAKGGWHGLGNTRFKSSINRTPRQRTLGSVGEKRDIQLELILIADVGTLGMPNAGKSTLVKSISGAKTKIANYPFTTLNPVLGSVNTEGKKFIIADIPGIMQNASQGFGLGVRFLKHLERCKILLHIVDLCPTDHSNPVENIRIILNELKKYNTSLYNKPRWLILNKIDLIKSSEIKKIIDKIKNFLKVEERFYLISSIKKIGVKKLCSDIAFYLQK.

An Obg domain is found at 1 to 159 (MKFIDQTIIQ…RDIQLELILI (159 aa)). The 173-residue stretch at 160–332 (ADVGTLGMPN…LCSDIAFYLQ (173 aa)) folds into the OBG-type G domain. Residues 166 to 173 (GMPNAGKS), 191 to 195 (FTTLN), 212 to 215 (DIPG), 282 to 285 (NKID), and 313 to 315 (SSI) contribute to the GTP site. Residues Ser-173 and Thr-193 each coordinate Mg(2+).

This sequence belongs to the TRAFAC class OBG-HflX-like GTPase superfamily. OBG GTPase family. As to quaternary structure, monomer. Requires Mg(2+) as cofactor.

The protein resides in the cytoplasm. In terms of biological role, an essential GTPase which binds GTP, GDP and possibly (p)ppGpp with moderate affinity, with high nucleotide exchange rates and a fairly low GTP hydrolysis rate. Plays a role in control of the cell cycle, stress response, ribosome biogenesis and in those bacteria that undergo differentiation, in morphogenesis control. In Buchnera aphidicola subsp. Schizaphis graminum (strain Sg), this protein is GTPase Obg.